The chain runs to 87 residues: Glutaredoxin (87 aa).

One can recognise a Glutaredoxin domain in the interval 1-87 (MFKVYGYDSN…GFDQLREYFK (87 aa)). A disulfide bond links C14 and C17.

The protein belongs to the glutaredoxin family.

In terms of biological role, serves as a reducing agent for the phage-induced ribonucleotide reductase, but not for the bacterial ones. This specificity may be the result of sequence differences around the redox-active disulfide bond. The oxidized form accepts electrons from bacterial glutathione and will, in turn, reduce other small disulfides. Can also be reduced by NADPH and by bacterial thioredoxin reductase. The polypeptide is Glutaredoxin (NRDC) (Enterobacteria phage T4 (Bacteriophage T4)).